A 101-amino-acid chain; its full sequence is Ubiquitin-related modifier 1 (101 aa).

1-thioglycine is present on G101. G101 is covalently cross-linked (Glycyl lysine isopeptide (Gly-Lys) (interchain with K-? in acceptor proteins)).

It belongs to the URM1 family. C-terminal thiocarboxylation occurs in 2 steps, it is first acyl-adenylated (-COAMP) via the hesA/moeB/thiF part of UBA4, then thiocarboxylated (-COSH) via the rhodanese domain of UBA4.

The protein resides in the cytoplasm. It participates in tRNA modification; 5-methoxycarbonylmethyl-2-thiouridine-tRNA biosynthesis. Its function is as follows. Acts as a sulfur carrier required for 2-thiolation of mcm(5)S(2)U at tRNA wobble positions of cytosolic tRNA(Lys), tRNA(Glu) and tRNA(Gln). Serves as sulfur donor in tRNA 2-thiolation reaction by being thiocarboxylated (-COSH) at its C-terminus by the MOCS3 homolog UBA4. The sulfur is then transferred to tRNA to form 2-thiolation of mcm(5)S(2)U. Prior mcm(5) tRNA modification by the elongator complex is required for 2-thiolation. Also acts as a ubiquitin-like protein (UBL) that is covalently conjugated via an isopeptide bond to lysine residues of target proteins such as AHP1. The thiocarboxylated form serves as substrate for conjugation and oxidative stress specifically induces the formation of UBL-protein conjugates. This Debaryomyces hansenii (strain ATCC 36239 / CBS 767 / BCRC 21394 / JCM 1990 / NBRC 0083 / IGC 2968) (Yeast) protein is Ubiquitin-related modifier 1.